A 346-amino-acid polypeptide reads, in one-letter code: MSKIFVDACFRKETPYTPVWMMRQAGRYLPEYMEVRAKAGNFLNLCHNPELAAEVTIQPLDIVGVDAAILFSDILVVPNEMGMKLDFLKGEGPVFDKPIKTEADLDALIGGEEAANKLTYVYETIKILKQRLPQDKALIGFTGAPWTLATYMIEGQGTKTYNLCKKMMYSNPEFLHKILRRVTDVVKFYMEKQIEAGVDVVQIFDSWAAAIEPSKYDEFSWKYMVEIAEYLKEKYPHIPVIMFPKGIAAFIERGLVYGNFDVFGVDWGTPMALAKEKLGEKYVLQGNMEPCRLYSKEATTMCVEGIQNIMGGNGHIFNLGHGILPDVPVENAIHFVKECQRVSKKA.

Substrate is bound by residues 23–27 (RQAGR), aspartate 73, tyrosine 151, serine 206, and histidine 321.

This sequence belongs to the uroporphyrinogen decarboxylase family. In terms of assembly, homodimer.

Its subcellular location is the cytoplasm. The enzyme catalyses uroporphyrinogen III + 4 H(+) = coproporphyrinogen III + 4 CO2. It participates in porphyrin-containing compound metabolism; protoporphyrin-IX biosynthesis; coproporphyrinogen-III from 5-aminolevulinate: step 4/4. Catalyzes the decarboxylation of four acetate groups of uroporphyrinogen-III to yield coproporphyrinogen-III. The polypeptide is Uroporphyrinogen decarboxylase (Aliarcobacter butzleri (strain RM4018) (Arcobacter butzleri)).